A 370-amino-acid chain; its full sequence is GDSL esterase/lipase At1g09390 (370 aa).

A signal peptide spans M1–A27. S44 acts as the Nucleophile in catalysis. N-linked (GlcNAc...) asparagine glycosylation is found at N90 and N315. Active-site residues include D336 and H339.

The protein belongs to the 'GDSL' lipolytic enzyme family.

The protein resides in the secreted. The polypeptide is GDSL esterase/lipase At1g09390 (Arabidopsis thaliana (Mouse-ear cress)).